A 209-amino-acid chain; its full sequence is Kinetochore protein Spc25 (209 aa).

Residues 74–107 (TRAVREKLAEERQKNAEMQAQLEKANDERIEQMD) adopt a coiled-coil conformation.

This sequence belongs to the SPC25 family. In terms of assembly, component of the Ndc80 complex, which is composed of Ndc80, Nuf2 and Spc25.

The protein resides in the nucleus. Its subcellular location is the chromosome. It is found in the centromere. It localises to the kinetochore. Functionally, acts as a component of the essential kinetochore-associated Ndc80 complex, which is required for chromosome segregation and spindle checkpoint activity during meiosis and mitosis. Required for kinetochore integrity and the organization of stable microtubule binding sites in the outer plate of the kinetochore. Participates in SAC signaling that responds specifically to disruptions in spindle microtubule dynamics. The NDC80 complex synergistically enhances the affinity of the SKA1 complex for microtubules and may allow the NDC80 complex to track depolymerizing microtubules. In Drosophila grimshawi (Hawaiian fruit fly), this protein is Kinetochore protein Spc25.